The following is a 521-amino-acid chain: Cytochrome b5 reductase 4 (521 aa).

M1 is modified (N-acetylmethionine). Positions M1–V18 are enriched in polar residues. The interval M1–P27 is disordered. Positions L54–A130 constitute a Cytochrome b5 heme-binding domain. The heme site is built by H89 and H112. In terms of domain architecture, CS spans P165–G256. One can recognise an FAD-binding FR-type domain in the interval L273–S385. FAD contacts are provided by residues D365–G380 and D392–L424.

This sequence belongs to the flavoprotein pyridine nucleotide cytochrome reductase family. Requires FAD as cofactor. In terms of tissue distribution, widely expressed.

The protein localises to the endoplasmic reticulum. It carries out the reaction 2 Fe(III)-[cytochrome b5] + NADH = 2 Fe(II)-[cytochrome b5] + NAD(+) + H(+). Its function is as follows. NADH-cytochrome b5 reductase involved in endoplasmic reticulum stress response pathway. Plays a critical role in protecting pancreatic beta-cells against oxidant stress, possibly by protecting the cell from excess buildup of reactive oxygen species (ROS). Reduces a variety of substrates in vitro, such as cytochrome c, feericyanide and methemoglobin. In Homo sapiens (Human), this protein is Cytochrome b5 reductase 4.